An 88-amino-acid chain; its full sequence is Putative transposase InsN for insertion sequence element IS911B (88 aa).

The protein belongs to the transposase 8 family.

Involved in the transposition of the insertion sequence IS911. The protein is Putative transposase InsN for insertion sequence element IS911B (insN2) of Escherichia coli (strain K12).